Consider the following 1150-residue polypeptide: C5a peptidase (1150 aa).

A signal peptide spans 1 to 31; that stretch reads MRKKQKLPFDKLAIALMSTSILLNAQSDIKA. Positions 33–73 are disordered; the sequence is TVTEDTPAAEQAVETPQPTAVSEEVPSSKETKTPQTPDNAE. The region spanning 99-581 is the Peptidase S8 domain; that stretch reads KATIRDLNDP…AGAVDAKKAS (483 aa). Residues Asp130, His193, and Ser512 each act as charge relay system in the active site. Basic and acidic residues-rich tracts occupy residues 1029 to 1054 and 1061 to 1073; these read EGHS…KPEQ and PDKK…EKDS. The tract at residues 1029–1116 is disordered; the sequence is EGHSNKPEQD…RDQLPTTNDK (88 aa). 3 repeat units span residues 1034–1050, 1051–1067, and 1068–1084. A 3 X 17 AA tandem repeats region spans residues 1034–1084; that stretch reads KPEQDGSDQAPDKKPEAKPEQDGSGQTPDKKPETKPEKDSSGQTPGKTPQK. A compositionally biased stretch (polar residues) spans 1075–1089; it reads GQTPGKTPQKGQPSR. Positions 1110–1114 match the LPXTG sorting signal motif; sequence LPTTN. Thr1113 carries the post-translational modification Pentaglycyl murein peptidoglycan amidated threonine. The propeptide at 1114 to 1150 is removed by sortase; it reads NDKDTNRLHLLKLVMTTFFFGLVAHIFKTKRQKETKK.

This sequence belongs to the peptidase S8 family. Post-translationally, cleaved by SpeB protease; leading to its degradation. Degradation by SpeB is probably strictly regulated to preserve integrity of C5a peptidase.

The protein resides in the secreted. The protein localises to the cell wall. The enzyme catalyses The primary cleavage site is at 67-His-|-Lys-68 in human C5a with a minor secondary cleavage site at 58-Ala-|-Ser-59.. Functionally, this virulence factor of S.pyogenes specifically cleaves the human serum chemotaxin C5a at '68-Lys-|-Asp-69' bond near its C-terminus, destroying its ability to serve as a chemoattractant. This chain is C5a peptidase (scpA), found in Streptococcus pyogenes serotype M18 (strain MGAS8232).